A 122-amino-acid polypeptide reads, in one-letter code: Large ribosomal subunit protein uL14 (122 aa).

This sequence belongs to the universal ribosomal protein uL14 family. As to quaternary structure, part of the 50S ribosomal subunit. Forms a cluster with proteins L3 and L19. In the 70S ribosome, L14 and L19 interact and together make contacts with the 16S rRNA in bridges B5 and B8.

Binds to 23S rRNA. Forms part of two intersubunit bridges in the 70S ribosome. This Bacillus licheniformis (strain ATCC 14580 / DSM 13 / JCM 2505 / CCUG 7422 / NBRC 12200 / NCIMB 9375 / NCTC 10341 / NRRL NRS-1264 / Gibson 46) protein is Large ribosomal subunit protein uL14.